The sequence spans 449 residues: Bifunctional protein GlmU (449 aa).

The tract at residues 1–226 (MVAVAILAAG…FQEISGINDR (226 aa)) is pyrophosphorylase. UDP-N-acetyl-alpha-D-glucosamine is bound by residues 7–10 (LAAG), Lys21, Gln73, and 78–79 (GT). Asp103 serves as a coordination point for Mg(2+). Residues Gly140, Glu155, Asn170, and Asn224 each contribute to the UDP-N-acetyl-alpha-D-glucosamine site. Asn224 contacts Mg(2+). The linker stretch occupies residues 227-247 (FQLSAAYEILQDRIKEKWMKA). Positions 248–449 (GVMIHQPDTV…KEIKGWRLQS (202 aa)) are N-acetyltransferase. UDP-N-acetyl-alpha-D-glucosamine contacts are provided by Arg329 and Lys347. The active-site Proton acceptor is His359. UDP-N-acetyl-alpha-D-glucosamine is bound by residues Tyr362 and Asn373. Residues Ala376, 382–383 (NY), Ala419, and Arg436 each bind acetyl-CoA.

This sequence in the N-terminal section; belongs to the N-acetylglucosamine-1-phosphate uridyltransferase family. In the C-terminal section; belongs to the transferase hexapeptide repeat family. As to quaternary structure, homotrimer. Mg(2+) serves as cofactor.

Its subcellular location is the cytoplasm. It carries out the reaction alpha-D-glucosamine 1-phosphate + acetyl-CoA = N-acetyl-alpha-D-glucosamine 1-phosphate + CoA + H(+). The enzyme catalyses N-acetyl-alpha-D-glucosamine 1-phosphate + UTP + H(+) = UDP-N-acetyl-alpha-D-glucosamine + diphosphate. Its pathway is nucleotide-sugar biosynthesis; UDP-N-acetyl-alpha-D-glucosamine biosynthesis; N-acetyl-alpha-D-glucosamine 1-phosphate from alpha-D-glucosamine 6-phosphate (route II): step 2/2. It participates in nucleotide-sugar biosynthesis; UDP-N-acetyl-alpha-D-glucosamine biosynthesis; UDP-N-acetyl-alpha-D-glucosamine from N-acetyl-alpha-D-glucosamine 1-phosphate: step 1/1. It functions in the pathway bacterial outer membrane biogenesis; LPS lipid A biosynthesis. Its function is as follows. Catalyzes the last two sequential reactions in the de novo biosynthetic pathway for UDP-N-acetylglucosamine (UDP-GlcNAc). The C-terminal domain catalyzes the transfer of acetyl group from acetyl coenzyme A to glucosamine-1-phosphate (GlcN-1-P) to produce N-acetylglucosamine-1-phosphate (GlcNAc-1-P), which is converted into UDP-GlcNAc by the transfer of uridine 5-monophosphate (from uridine 5-triphosphate), a reaction catalyzed by the N-terminal domain. The chain is Bifunctional protein GlmU from Picosynechococcus sp. (strain ATCC 27264 / PCC 7002 / PR-6) (Agmenellum quadruplicatum).